The primary structure comprises 33 residues: GLFSVVTGVLKAVGKNVAGSLLEQLKCKISGGC.

A disulfide bridge connects residues Cys-27 and Cys-33.

The protein belongs to the frog skin active peptide (FSAP) family. Brevinin subfamily. Expressed by the skin glands.

It localises to the secreted. Its function is as follows. Antimicrobial peptide. This Rana dybowskii (Dybovsky's frog) protein is Brevinin-2CDYb.